The chain runs to 327 residues: Phenylalanine--tRNA ligase alpha subunit (327 aa).

Residue Glu-252 participates in Mg(2+) binding.

The protein belongs to the class-II aminoacyl-tRNA synthetase family. Phe-tRNA synthetase alpha subunit type 1 subfamily. As to quaternary structure, tetramer of two alpha and two beta subunits. It depends on Mg(2+) as a cofactor.

The protein localises to the cytoplasm. The catalysed reaction is tRNA(Phe) + L-phenylalanine + ATP = L-phenylalanyl-tRNA(Phe) + AMP + diphosphate + H(+). The chain is Phenylalanine--tRNA ligase alpha subunit from Shewanella sp. (strain MR-7).